The sequence spans 158 residues: Endoribonuclease YbeY (158 aa).

Zn(2+) is bound by residues His119, His123, and Asp129.

It belongs to the endoribonuclease YbeY family. The cofactor is Zn(2+).

It localises to the cytoplasm. Functionally, single strand-specific metallo-endoribonuclease involved in late-stage 70S ribosome quality control and in maturation of the 3' terminus of the 16S rRNA. This Chlamydia abortus (strain DSM 27085 / S26/3) (Chlamydophila abortus) protein is Endoribonuclease YbeY.